The sequence spans 737 residues: Transcription termination factor Rho (737 aa).

A disordered region spans residues 1 to 396 (MSGPCSAHRV…ENSYLPDPTD (396 aa)). Composition is skewed to low complexity over residues 16 to 28 (RPTIRSPRITRSS), 62 to 86 (ASRASSESRSESGSGLSAEGSGSDA), and 101 to 111 (DAESAPTAADT). 4 stretches are compositionally biased toward basic and acidic residues: residues 145-175 (PRAESPRSEPRTESRPEPRAENGSETRHESR), 196-256 (SMER…DRRD), 266-279 (GRPDNRGPGGDRHQ), and 286-324 (DRSHDRGPDRNNERAFDRPERPDRQGESSDRFDSQDRGG). Positions 328–339 (RNGRRGRNRFRR) are enriched in basic residues. The segment covering 347–360 (APISGSHAPSQGSP) has biased composition (polar residues). The Rho RNA-BD domain maps to 367-439 (EGTMAGWFDP…IEVQTLNDGS (73 aa)). The span at 376-387 (PSRDGGFLRRPE) shows a compositional bias: basic and acidic residues. ATP-binding positions include 487–492 (GYGQRA), 499–504 (RAGKTT), and Arg-530.

This sequence belongs to the Rho family. Homohexamer. The homohexamer assembles into an open ring structure.

Facilitates transcription termination by a mechanism that involves Rho binding to the nascent RNA, activation of Rho's RNA-dependent ATPase activity, and release of the mRNA from the DNA template. The polypeptide is Transcription termination factor Rho (Gemmatimonas aurantiaca (strain DSM 14586 / JCM 11422 / NBRC 100505 / T-27)).